Here is an 851-residue protein sequence, read N- to C-terminus: Glutathione transporter 1 (851 aa).

Residues 1 to 14 are compositionally biased toward polar residues; the sequence is MTARNSASIPTSIR. The disordered stretch occupies residues 1 to 116; that stretch reads MTARNSASIP…LDNETDSEVE (116 aa). A glycan (N-linked (GlcNAc...) asparagine) is linked at asparagine 32. The segment covering 33-68 has biased composition (low complexity); sequence LSTKTASKTSLTFRQSSSDESTSSYSGNHHNINIQH. The span at 74 to 92 shows a compositional bias: polar residues; that stretch reads FRTNSSSFSPNDYSISESP. Residue asparagine 77 is glycosylated (N-linked (GlcNAc...) asparagine). The residue at position 93 (serine 93) is a Phosphoserine. The stretch at 105-134 forms a coiled coil; that stretch reads VQLDNETDSEVESEVEELERELEAIEDSVY. Asparagine 109 carries an N-linked (GlcNAc...) asparagine glycan. The next 2 membrane-spanning stretches (helical) occupy residues 156 to 176 and 179 to 199; these read TWVLTTIFVIVFAAVNQFFSL and PALSISFIVAQLILFPLGKLL. The N-linked (GlcNAc...) asparagine glycan is linked to asparagine 256. A run of 4 helical transmembrane segments spans residues 259-279, 282-302, 333-353, and 405-425; these read WGYKILIVLTSQMLGYGFAGL, RWIVYPAAMIWPQTLVSTVLF, FFAYVMIGSFVFYWFPGFIFK, and WVICNTFGSVVLIFWIVVPIL. N-linked (GlcNAc...) asparagine glycans are attached at residues asparagine 452 and asparagine 464. 5 consecutive transmembrane segments (helical) span residues 480–500, 531–551, 560–580, 592–612, and 642–662; these read YSMSTALNFAAVTAIFTHCAL, APQWWYATLFIVVFGLTIFTV, VWALIVALLIFIVNFIPQGVL, IITELIGGYILPGKPLANLMI, and ILFFVQLFATILGGITQVAVQ. Asparagine 691 is a glycosylation site (N-linked (GlcNAc...) asparagine). The next 3 membrane-spanning stretches (helical) occupy residues 711-731, 757-777, and 791-811; these read YYPLIFFFLIGAVAPFITWGL, PATGINYSSWAIVGFIFNYVI, and VLAAAMDSGVAVAGVVIFLCV. Asparagine 843 carries N-linked (GlcNAc...) asparagine glycosylation.

The protein belongs to the oligopeptide OPT transporter family.

The protein localises to the endoplasmic reticulum membrane. Its subcellular location is the cell membrane. High-affinity glutathione transporter which plays a role in scavenging glutathione from the extracellular environment for the maintenance of sulfur homeostasis. The sequence is that of Glutathione transporter 1 (pgt1) from Schizosaccharomyces pombe (strain 972 / ATCC 24843) (Fission yeast).